We begin with the raw amino-acid sequence, 346 residues long: Cyclin-dependent kinase 7 (346 aa).

The residue at position 2 (Ala2) is an N-acetylalanine. Ser7 carries the post-translational modification Phosphoserine. The region spanning 12–295 is the Protein kinase domain; it reads YEKLDFLGEG…ATQALKMKYF (284 aa). ATP is bound by residues 18–26 and Lys41; that span reads LGEGQFATV. Asp137 functions as the Proton acceptor in the catalytic mechanism. Ser164 carries the post-translational modification Phosphoserine; by CDK1 and CDK2. Thr170 is subject to Phosphothreonine; by CDK2. Position 321 is a phosphoserine (Ser321).

Belongs to the protein kinase superfamily. CMGC Ser/Thr protein kinase family. CDC2/CDKX subfamily. As to quaternary structure, associates primarily with cyclin-H (CCNH) and MAT1 to form the CAK complex. CAK can further associate with the core-TFIIH to form the TFIIH basal transcription factor; this complex is sensitive to UV light. The CAK complex binds to p53/TP53 in response to DNA damage. Interacts with CDK2, SF1/NR5A1, PUF60 and PRKCI. Interacts with HINT1. Post-translationally, phosphorylation of Ser-164 during mitosis inactivates the enzyme. Phosphorylation of Thr-170 is required for activity. Phosphorylated at Ser-164 and Thr-170 by CDK2. As to expression, ubiquitous.

It is found in the nucleus. The protein localises to the cytoplasm. Its subcellular location is the perinuclear region. It catalyses the reaction L-seryl-[protein] + ATP = O-phospho-L-seryl-[protein] + ADP + H(+). The catalysed reaction is L-threonyl-[protein] + ATP = O-phospho-L-threonyl-[protein] + ADP + H(+). The enzyme catalyses [DNA-directed RNA polymerase] + ATP = phospho-[DNA-directed RNA polymerase] + ADP + H(+). With respect to regulation, inactivated by phosphorylation. Repressed by roscovitine (seliciclib, CYC202), R547 (Ro-4584820) and SNS-032 (BMS-387032). The association of p53/TP53 to the CAK complex in response to DNA damage reduces kinase activity toward CDK2 and RNA polymerase II repetitive C-terminal domain (CTD), thus stopping cell cycle progression. The inactivation by roscovitine promotes caspase-mediated apoptosis in leukemic cells. Specifically inactivated by THZ1. Serine/threonine kinase involved in cell cycle control and in RNA polymerase II-mediated RNA transcription. Cyclin-dependent kinases (CDKs) are activated by the binding to a cyclin and mediate the progression through the cell cycle. Each different complex controls a specific transition between 2 subsequent phases in the cell cycle. Required for both activation and complex formation of CDK1/cyclin-B during G2-M transition, and for activation of CDK2/cyclins during G1-S transition (but not complex formation). CDK7 is the catalytic subunit of the CDK-activating kinase (CAK) complex. Phosphorylates SPT5/SUPT5H, SF1/NR5A1, POLR2A, p53/TP53, CDK1, CDK2, CDK4, CDK6 and CDK11B/CDK11. Initiates transcription by RNA polymerase II by mediating phosphorylation of POLR2A at 'Ser-5' of the repetitive C-terminal domain (CTD) when POLR2A is in complex with DNA, promoting dissociation from DNA and initiation. CAK activates the cyclin-associated kinases CDK1, CDK2, CDK4 and CDK6 by threonine phosphorylation, thus regulating cell cycle progression. CAK complexed to the core-TFIIH basal transcription factor activates RNA polymerase II by serine phosphorylation of the CTD of POLR2A, allowing its escape from the promoter and elongation of the transcripts. Its expression and activity are constant throughout the cell cycle. Upon DNA damage, triggers p53/TP53 activation by phosphorylation, but is inactivated in turn by p53/TP53; this feedback loop may lead to an arrest of the cell cycle and of the transcription, helping in cell recovery, or to apoptosis. Required for DNA-bound peptides-mediated transcription and cellular growth inhibition. This is Cyclin-dependent kinase 7 (CDK7) from Homo sapiens (Human).